Consider the following 1372-residue polypeptide: DNA-directed RNA polymerase subunit beta (1372 aa).

Belongs to the RNA polymerase beta chain family. The RNAP catalytic core consists of 2 alpha, 1 beta, 1 beta' and 1 omega subunit. When a sigma factor is associated with the core the holoenzyme is formed, which can initiate transcription.

The enzyme catalyses RNA(n) + a ribonucleoside 5'-triphosphate = RNA(n+1) + diphosphate. DNA-dependent RNA polymerase catalyzes the transcription of DNA into RNA using the four ribonucleoside triphosphates as substrates. The polypeptide is DNA-directed RNA polymerase subunit beta (Psychrobacter arcticus (strain DSM 17307 / VKM B-2377 / 273-4)).